Here is a 367-residue protein sequence, read N- to C-terminus: UDP-N-acetylglucosamine--N-acetylmuramyl-(pentapeptide) pyrophosphoryl-undecaprenol N-acetylglucosamine transferase (367 aa).

Residues 15–17 (TGG), asparagine 127, arginine 163, serine 191, isoleucine 249, and glutamine 294 each bind UDP-N-acetyl-alpha-D-glucosamine.

The protein belongs to the glycosyltransferase 28 family. MurG subfamily.

The protein localises to the cell inner membrane. The enzyme catalyses di-trans,octa-cis-undecaprenyl diphospho-N-acetyl-alpha-D-muramoyl-L-alanyl-D-glutamyl-meso-2,6-diaminopimeloyl-D-alanyl-D-alanine + UDP-N-acetyl-alpha-D-glucosamine = di-trans,octa-cis-undecaprenyl diphospho-[N-acetyl-alpha-D-glucosaminyl-(1-&gt;4)]-N-acetyl-alpha-D-muramoyl-L-alanyl-D-glutamyl-meso-2,6-diaminopimeloyl-D-alanyl-D-alanine + UDP + H(+). The protein operates within cell wall biogenesis; peptidoglycan biosynthesis. In terms of biological role, cell wall formation. Catalyzes the transfer of a GlcNAc subunit on undecaprenyl-pyrophosphoryl-MurNAc-pentapeptide (lipid intermediate I) to form undecaprenyl-pyrophosphoryl-MurNAc-(pentapeptide)GlcNAc (lipid intermediate II). The polypeptide is UDP-N-acetylglucosamine--N-acetylmuramyl-(pentapeptide) pyrophosphoryl-undecaprenol N-acetylglucosamine transferase (Burkholderia pseudomallei (strain 668)).